We begin with the raw amino-acid sequence, 241 residues long: Type III pantothenate kinase (241 aa).

6-13 (DVGNTRIK) contacts ATP. 94 to 97 (GIDR) lines the substrate pocket. D96 serves as the catalytic Proton acceptor. Position 117 (D117) interacts with K(+). Residue T120 coordinates ATP. T172 is a binding site for substrate.

The protein belongs to the type III pantothenate kinase family. As to quaternary structure, homodimer. Requires NH4(+) as cofactor. The cofactor is K(+).

Its subcellular location is the cytoplasm. It carries out the reaction (R)-pantothenate + ATP = (R)-4'-phosphopantothenate + ADP + H(+). Its pathway is cofactor biosynthesis; coenzyme A biosynthesis; CoA from (R)-pantothenate: step 1/5. Its function is as follows. Catalyzes the phosphorylation of pantothenate (Pan), the first step in CoA biosynthesis. This is Type III pantothenate kinase from Flavobacterium psychrophilum (strain ATCC 49511 / DSM 21280 / CIP 103535 / JIP02/86).